The primary structure comprises 388 residues: Beta-hexosaminidase LpqI (388 aa).

The first 19 residues, 1–19, serve as a signal peptide directing secretion; sequence MAFPRTLAILAAAAALVVA. A lipid anchor (N-palmitoyl cysteine) is attached at C20. Residue C20 is the site of S-diacylglycerol cysteine attachment. Residues D123, R131, R193, and 223–224 contribute to the substrate site; that span reads KH. H236 acts as the Proton donor/acceptor in catalysis. D311 serves as the catalytic Nucleophile.

This sequence belongs to the glycosyl hydrolase 3 family.

It is found in the cell inner membrane. The enzyme catalyses Hydrolysis of terminal non-reducing N-acetyl-D-hexosamine residues in N-acetyl-beta-D-hexosaminides.. Its pathway is cell wall biogenesis; peptidoglycan recycling. Plays a role in peptidoglycan recycling by cleaving the terminal beta-1,4-linked N-acetylglucosamine (GlcNAc) from peptidoglycan fragments. Acts as a regulator for GlcNAc-MurNAc levels by cleaving disaccharides and allowing the breakdown of MurNAc. The sequence is that of Beta-hexosaminidase LpqI from Mycobacterium bovis (strain BCG / Pasteur 1173P2).